The following is a 73-amino-acid chain: Putative antimicrobial peptide clone 4 (73 aa).

The N-terminal stretch at 1-22 (MQMKYLIPIFFLVLIVADHCHA) is a signal peptide. A propeptide spanning residues 45–73 (DITSQIEQYRNLQKREAELEDILANLPVY) is cleaved from the precursor.

The protein belongs to the non-disulfide-bridged peptide (NDBP) superfamily. Short antimicrobial peptide (group 4) family. As to expression, expressed by the venom gland.

It localises to the secreted. Functionally, antimicrobial peptide. Has a high antibacterial activity against the Gram-positive bacterium S.aureus (MIC=5-17.30 uM), the methicillin-resistant S.aureus (MRSA) (MIC=17.30 uM), and E.faecalis (MIC=69.23 uM). Has antifungal activity against Candida spp. and one Cryptococcus neoformans strains with MICs values ranging from 6.25 to 100 uM. Also shows an inhibitory activity on C.albicans biofilms at high concentrations. Has a moderate hemolytic potency (18% at 20 uM). Also inhibits the growth of the five cancer cell lines tested. In the model of polymicrobial sepsis, it exhibits an antibiotic effect, reducing the levels of microorganisms in the infectious focus and the inflammatory responses in the lung and cecum of septic animals. In Tityus costatus (Brazilian scorpion), this protein is Putative antimicrobial peptide clone 4.